The chain runs to 273 residues: Ribosomal RNA small subunit methyltransferase I (273 aa).

The protein belongs to the methyltransferase superfamily. RsmI family.

Its subcellular location is the cytoplasm. The catalysed reaction is cytidine(1402) in 16S rRNA + S-adenosyl-L-methionine = 2'-O-methylcytidine(1402) in 16S rRNA + S-adenosyl-L-homocysteine + H(+). In terms of biological role, catalyzes the 2'-O-methylation of the ribose of cytidine 1402 (C1402) in 16S rRNA. The polypeptide is Ribosomal RNA small subunit methyltransferase I (Xylella fastidiosa (strain Temecula1 / ATCC 700964)).